We begin with the raw amino-acid sequence, 928 residues long: 2-oxoglutarate dehydrogenase E1 component (928 aa).

This sequence belongs to the alpha-ketoglutarate dehydrogenase family. In terms of assembly, homodimer. Part of the 2-oxoglutarate dehydrogenase (OGDH) complex composed of E1 (2-oxoglutarate dehydrogenase), E2 (dihydrolipoamide succinyltransferase) and E3 (dihydrolipoamide dehydrogenase); the complex contains multiple copies of the three enzymatic components (E1, E2 and E3). Thiamine diphosphate is required as a cofactor.

It carries out the reaction N(6)-[(R)-lipoyl]-L-lysyl-[protein] + 2-oxoglutarate + H(+) = N(6)-[(R)-S(8)-succinyldihydrolipoyl]-L-lysyl-[protein] + CO2. E1 component of the 2-oxoglutarate dehydrogenase (OGDH) complex which catalyzes the decarboxylation of 2-oxoglutarate, the first step in the conversion of 2-oxoglutarate to succinyl-CoA and CO(2). This is 2-oxoglutarate dehydrogenase E1 component (sucA) from Rickettsia conorii (strain ATCC VR-613 / Malish 7).